A 522-amino-acid chain; its full sequence is Chromosomal replication initiator protein DnaA (522 aa).

The tract at residues 1–71 (MQDFWHAASA…QSLACDYWEM (71 aa)) is domain I, interacts with DnaA modulators. A domain II region spans residues 71-185 (MQVDVQFVLD…PVDDTVHERS (115 aa)). Positions 186 to 402 (RLNPILTFDN…GALRKILAYS (217 aa)) are domain III, AAA+ region. Residues G230, G232, K233, and T234 each coordinate ATP. The interval 403–522 (NFHGKEITIE…LHVLEQTLKG (120 aa)) is domain IV, binds dsDNA.

Belongs to the DnaA family. As to quaternary structure, oligomerizes as a right-handed, spiral filament on DNA at oriC.

Its subcellular location is the cytoplasm. Plays an essential role in the initiation and regulation of chromosomal replication. ATP-DnaA binds to the origin of replication (oriC) to initiate formation of the DNA replication initiation complex once per cell cycle. Binds the DnaA box (a 9 base pair repeat at the origin) and separates the double-stranded (ds)DNA. Forms a right-handed helical filament on oriC DNA; dsDNA binds to the exterior of the filament while single-stranded (ss)DNA is stabiized in the filament's interior. The ATP-DnaA-oriC complex binds and stabilizes one strand of the AT-rich DNA unwinding element (DUE), permitting loading of DNA polymerase. After initiation quickly degrades to an ADP-DnaA complex that is not apt for DNA replication. Binds acidic phospholipids. The sequence is that of Chromosomal replication initiator protein DnaA from Ralstonia nicotianae (strain ATCC BAA-1114 / GMI1000) (Ralstonia solanacearum).